Reading from the N-terminus, the 875-residue chain is Valine--tRNA ligase (875 aa).

The 'HIGH' region motif lies at 41–51 (PNVTGSLHMGH). The 'KMSKS' region motif lies at 525-529 (KMSKS). Lys-528 is an ATP binding site. Residues 810–875 (VDLELIKKNL…ERISITIKGL (66 aa)) are a coiled coil.

This sequence belongs to the class-I aminoacyl-tRNA synthetase family. ValS type 1 subfamily. In terms of assembly, monomer.

The protein localises to the cytoplasm. The enzyme catalyses tRNA(Val) + L-valine + ATP = L-valyl-tRNA(Val) + AMP + diphosphate. Its function is as follows. Catalyzes the attachment of valine to tRNA(Val). As ValRS can inadvertently accommodate and process structurally similar amino acids such as threonine, to avoid such errors, it has a 'posttransfer' editing activity that hydrolyzes mischarged Thr-tRNA(Val) in a tRNA-dependent manner. The polypeptide is Valine--tRNA ligase (Pelagibacter ubique (strain HTCC1062)).